The primary structure comprises 375 residues: MADHSFSDGVPSDSVEAAKNASNTEKLTDQVMQNPRVLAALQERLDNVPHTPSSYIETLPKAVKRRINALKQLQVRCAHIEAKFYEEVHDLERKYAALYQPLFDKRREFITGDVEPTDAESEWHSENEEEEKLAGDMKSKVVVTEKAAATAEEPDPKGIPEFWFTIFRNVDMLSELVQEYDEPILKHLQDIKVKFSDPGQPMSFVLEFHFEPNDYFTNSVLTKTYKMKSEPDKADPFSFEGPEIVDCDGCTIDWKKGKNVTVKTIKKKQKHKGRGTVRTITKQVPNESFFNFFNPLKASGDGESLDEDSEFTLASDFEIGHFFRERIVPRAVLYFTGEAIEDDDNFEEGEEGEEEELEGDEEGEDEDDAEINPKV.

Residues 1–31 (MADHSFSDGVPSDSVEAAKNASNTEKLTDQV) form a disordered region. Alanine 2 is modified (N-acetylalanine). Residues serine 5, serine 7, and serine 12 each carry the phosphoserine modification. Over residues 20 to 31 (NASNTEKLTDQV) the composition is skewed to polar residues. Threonine 51 carries the post-translational modification Phosphothreonine. Residues serine 53 and serine 54 each carry the phosphoserine modification. Threonine 58 bears the Phosphothreonine mark. An N6-acetyllysine modification is found at lysine 105. The disordered stretch occupies residues 116–137 (PTDAESEWHSENEEEEKLAGDM). Residues 121–137 (SEWHSENEEEEKLAGDM) are compositionally biased toward basic and acidic residues. Serine 125 carries the phosphoserine modification. Lysine 146 bears the N6-acetyllysine mark. A Nuclear localization signal motif is present at residues 265 to 271 (IKKKQKH). A Phosphoserine modification is found at serine 304. The disordered stretch occupies residues 339–375 (AIEDDDNFEEGEEGEEEELEGDEEGEDEDDAEINPKV).

This sequence belongs to the nucleosome assembly protein (NAP) family. In terms of assembly, interacts with core (H2A, CD2APH2B, H3, H4) and linker (H1) histones. As to quaternary structure, (Microbial infection) Interacts with Chikungunya virus non-structural protein 3 (via C-terminus). Phosphorylated at the G0/G1 boundary but it is not phosphorylated in S-phase. Phosphorylated protein remains in the cytoplasm in a complex with histones during the G0/G1 transition, whereas dephosphorylation triggers its transport into the nucleus at the G1/S-boundary. Post-translationally, polyglutamylated by TTLL4, a modification that occurs exclusively on glutamate residues and results in polyglutamate chains on the gamma-carboxyl group. Some residues may also be monoglycylated but not polyglycylated due to the absence of functional TTLL10 in human. As to expression, ubiquitous. Biallelically expressed in fetal and adult tissues. Highest levels in testis.

It localises to the nucleus. It is found in the cytoplasm. Its function is as follows. Acts as a histone chaperone in nucleosome assembly. The protein is Nucleosome assembly protein 1-like 4 of Homo sapiens (Human).